A 55-amino-acid polypeptide reads, in one-letter code: ATP synthase F(0) complex subunit 8 (55 aa).

A helical transmembrane segment spans residues 7–24; sequence NPWFYIMLMSWLTFSLII. A disordered region spans residues 35–55; sequence NPPSNKTSTTTRTLPWTWPWT. Low complexity predominate over residues 41 to 55; the sequence is TSTTTRTLPWTWPWT.

It belongs to the ATPase protein 8 family. Component of the ATP synthase complex composed at least of ATP5F1A/subunit alpha, ATP5F1B/subunit beta, ATP5MC1/subunit c (homooctomer), MT-ATP6/subunit a, MT-ATP8/subunit 8, ATP5ME/subunit e, ATP5MF/subunit f, ATP5MG/subunit g, ATP5MK/subunit k, ATP5MJ/subunit j, ATP5F1C/subunit gamma, ATP5F1D/subunit delta, ATP5F1E/subunit epsilon, ATP5PF/subunit F6, ATP5PB/subunit b, ATP5PD/subunit d, ATP5PO/subunit OSCP. ATP synthase complex consists of a soluble F(1) head domain (subunits alpha(3) and beta(3)) - the catalytic core - and a membrane F(0) domain - the membrane proton channel (subunits c, a, 8, e, f, g, k and j). These two domains are linked by a central stalk (subunits gamma, delta, and epsilon) rotating inside the F1 region and a stationary peripheral stalk (subunits F6, b, d, and OSCP).

The protein localises to the mitochondrion membrane. In terms of biological role, subunit 8, of the mitochondrial membrane ATP synthase complex (F(1)F(0) ATP synthase or Complex V) that produces ATP from ADP in the presence of a proton gradient across the membrane which is generated by electron transport complexes of the respiratory chain. ATP synthase complex consist of a soluble F(1) head domain - the catalytic core - and a membrane F(1) domain - the membrane proton channel. These two domains are linked by a central stalk rotating inside the F(1) region and a stationary peripheral stalk. During catalysis, ATP synthesis in the catalytic domain of F(1) is coupled via a rotary mechanism of the central stalk subunits to proton translocation. In vivo, can only synthesize ATP although its ATP hydrolase activity can be activated artificially in vitro. Part of the complex F(0) domain. The protein is ATP synthase F(0) complex subunit 8 of Corythaixoides concolor (Grey go-away-bird).